Consider the following 232-residue polypeptide: Ornithine carbamoyltransferase (232 aa).

Residues Gln-15, Arg-39, and 66 to 69 (HPTQ) each bind carbamoyl phosphate. L-ornithine is bound by residues Asn-99, Asp-163, and 167-168 (SM). Residues 204–207 (HCLP) and Thr-232 each bind carbamoyl phosphate.

It belongs to the aspartate/ornithine carbamoyltransferase superfamily. OTCase family.

The protein resides in the cytoplasm. The enzyme catalyses carbamoyl phosphate + L-ornithine = L-citrulline + phosphate + H(+). It participates in amino-acid biosynthesis; L-arginine biosynthesis; L-arginine from L-ornithine and carbamoyl phosphate: step 1/3. In terms of biological role, reversibly catalyzes the transfer of the carbamoyl group from carbamoyl phosphate (CP) to the N(epsilon) atom of ornithine (ORN) to produce L-citrulline. The chain is Ornithine carbamoyltransferase (argF) from Neisseria subflava.